A 313-amino-acid chain; its full sequence is Olfactory receptor 51A4 (313 aa).

The Extracellular portion of the chain corresponds to 1-27 (MSIINTSYVEITTFFLVGMPGLEYAHI). The N-linked (GlcNAc...) asparagine glycan is linked to Asn5. Residues 28 to 48 (WISIPICSMYLIAILGNGTIL) form a helical membrane-spanning segment. Topologically, residues 49–56 (FIIKTEPS) are cytoplasmic. The chain crosses the membrane as a helical span at residues 57–77 (LHEPMYYFLSMLAMSDLGLSL). Residues 78-101 (SSLPTVLSIFLFNAPEISSNACFA) lie on the Extracellular side of the membrane. A disulfide bridge connects residues Cys99 and Cys191. Residues 102–122 (QEFFIHGFSVLESSVLLIMSF) form a helical membrane-spanning segment. The Cytoplasmic portion of the chain corresponds to 123-141 (DRFLAIHNPLRYTSILTTV). Residues 142–162 (RVAQIGIVFSFKSMLLVLPFP) form a helical membrane-spanning segment. The Extracellular segment spans residues 163–198 (FTLRNLRYCKKNQLSHSYCLHQDVMKLACSDNRIDV). A helical membrane pass occupies residues 199–218 (IYGFFGALCLMVDFILIAVS). Residues 219–238 (YTLILKTVLGIASKKEQLKA) lie on the Cytoplasmic side of the membrane. Residues 239–259 (LNTCVSHICAVIIFYLPIINL) form a helical membrane-spanning segment. Topologically, residues 260 to 274 (AVVHRFARHVSPLIN) are extracellular. Residues 275–295 (VLMANVLLLVPPLTNPIVYCV) form a helical membrane-spanning segment. Residues 296 to 313 (KTKQIRVRVVAKLCQRKI) lie on the Cytoplasmic side of the membrane.

This sequence belongs to the G-protein coupled receptor 1 family.

The protein resides in the cell membrane. Functionally, odorant receptor. The protein is Olfactory receptor 51A4 (OR51A4) of Homo sapiens (Human).